The primary structure comprises 468 residues: Probable Xaa-Pro aminopeptidase pepP (468 aa).

Aspartate 265, aspartate 276, glutamate 399, and glutamate 439 together coordinate Mn(2+).

Belongs to the peptidase M24B family. The cofactor is Mn(2+).

It catalyses the reaction Release of any N-terminal amino acid, including proline, that is linked to proline, even from a dipeptide or tripeptide.. Functionally, catalyzes the removal of a penultimate prolyl residue from the N-termini of peptides. This Aspergillus fumigatus (strain CBS 144.89 / FGSC A1163 / CEA10) (Neosartorya fumigata) protein is Probable Xaa-Pro aminopeptidase pepP (pepP).